The chain runs to 369 residues: Choline-phosphate cytidylyltransferase B (369 aa).

Residues 1-27 (MPVVTTDAESETGIPKSLSNEPPSETM) form a disordered region. The CTP site is built by isoleucine 84, phenylalanine 85, histidine 92, and lysine 122. Residues lysine 122 and tryptophan 151 each coordinate phosphocholine. Residues histidine 168, aspartate 169, tyrosine 173, glutamine 195, arginine 196, threonine 197, and isoleucine 200 each coordinate CTP. Residues 309–369 (RMLQALSPKQ…SMSEGDEDEK (61 aa)) are disordered. Phosphoserine is present on residues serine 315, serine 319, serine 322, serine 323, serine 329, serine 331, and serine 335. A compositionally biased stretch (low complexity) spans 319–339 (SPVSSPTRSRSPSRSPSPTFS). Threonine 345 carries the post-translational modification Phosphothreonine. 6 positions are modified to phosphoserine: serine 346, serine 349, serine 350, serine 355, serine 360, and serine 362. The span at 351–362 (PKAASASISSMS) shows a compositional bias: low complexity.

The protein belongs to the cytidylyltransferase family. As to quaternary structure, homodimer. Phosphorylated. Post-translationally, extensively phosphorylated. As to expression, highly expressed in testis, placenta, brain, ovary, liver and fetal lung. In terms of tissue distribution, expressed in brain, liver and fetal lung.

The protein resides in the cytoplasm. It is found in the endoplasmic reticulum. It catalyses the reaction phosphocholine + CTP + H(+) = CDP-choline + diphosphate. It participates in phospholipid metabolism; phosphatidylcholine biosynthesis; phosphatidylcholine from phosphocholine: step 1/2. In terms of biological role, catalyzes the key rate-limiting step in the CDP-choline pathway for phosphatidylcholine biosynthesis. In Homo sapiens (Human), this protein is Choline-phosphate cytidylyltransferase B (PCYT1B).